Here is a 269-residue protein sequence, read N- to C-terminus: MSSVPKRAKLDGAPADGNTSAAAGNNEEESEALEQIDACQNEIDALNEKASEEILKVEQKYNKLRKPCYEKRSELVKRIPNFWVTSFINHPQVSGILDEEEEECLHALNKLEVEEFEDIKSGYRINFHFDENPYFENKVLTKEFHLNSAAASENGDWPASTSTPIKWKEGKNLLKLLLTKPYGNKKKRNSEYKTFFDWFSDNTDPVNDEIAELIKDDLWPNPLQYYLVPDIEVEPEDEEDNEDNDEEAFDDEDGEDGEGEEEEEDEDDK.

A disordered region spans residues 1–33 (MSSVPKRAKLDGAPADGNTSAAAGNNEEESEAL). A phosphoserine mark is found at S30, S148, and S152. The interval 227–269 (LVPDIEVEPEDEEDNEDNDEEAFDDEDGEDGEGEEEEEDEDDK) is disordered. Residues 231 to 269 (IEVEPEDEEDNEDNDEEAFDDEDGEDGEGEEEEEDEDDK) are compositionally biased toward acidic residues.

This sequence belongs to the nucleosome assembly protein (NAP) family. In terms of assembly, interacts specifically with B-type cyclins.

In Drosophila melanogaster (Fruit fly), this protein is Protein SET (Set).